The chain runs to 219 residues: MQIRYAGHSCFIIEGSKKLLFDPMPLEDPAAVEADLTLISHAHADHIGDAFARFSLTIAVHELSGYLKSLGVKTIGMNIGGSVEWEGITVRMVPATHSSSIRQKDGTSLYMGQACGFVVEMDGHVIYYAGDTGLFSDMKLIRELYHPDIAILPAGGRYTMGPEECMMAAAWIGAKTVIPMHVNTYPEIEQDMPAFKRAIELTTVMHVEIMQPDDVLELP.

The protein belongs to the UPF0173 family.

In Methanocorpusculum labreanum (strain ATCC 43576 / DSM 4855 / Z), this protein is UPF0173 metal-dependent hydrolase Mlab_1154.